Here is a 317-residue protein sequence, read N- to C-terminus: MEKVYVAGAIPEVGLKLLQEHFEVEMYEGKGLVDKDTLIKGVKNATALISLLSTNVDKDVIDAGKDLKIIANYGAGFNNIDIEYAREKSIDVTNTPKASTNATADLTIGLVLAVARRIVEGDQLSRTTGFDGWAPLFFRGREVSGKTIGIIGLGEIGSAVARRARAFDMDVLYTGPNRKEEKEREIGAKYVDLDTLLKNADFITINAAYNPKMHHLIDTEQFKMMKSTAYLINASRGPIVHEQALVQALKDNEIEGAALDVYEFEPDITDDLKSLNNVVLTPHIGNATFEARDMMSKIVANAAISAVQGEKPQFVVN.

NAD(+) is bound by residues 155-156, 234-236, and aspartate 260; these read EI and ASR. Arginine 236 is a catalytic residue. Glutamate 265 is a catalytic residue. The active-site Proton donor is the histidine 283. 283 to 286 is an NAD(+) binding site; that stretch reads HIGN.

This sequence belongs to the D-isomer specific 2-hydroxyacid dehydrogenase family.

In Staphylococcus aureus (strain NCTC 8325 / PS 47), this protein is Putative 2-hydroxyacid dehydrogenase SAOUHSC_02577.